A 333-amino-acid polypeptide reads, in one-letter code: S-adenosylmethionine-dependent nucleotide dehydratase (333 aa).

One can recognise a Radical SAM core domain in the interval M1–I239. Residues C16, C20, and C23 each coordinate [4Fe-4S] cluster.

It belongs to the radical SAM superfamily. Viperin family. Requires [4Fe-4S] cluster as cofactor.

It catalyses the reaction GTP + AH2 + S-adenosyl-L-methionine = 3'-deoxy-3',4'-didehydro-GTP + 5'-deoxyadenosine + L-methionine + A + H2O + H(+). Functionally, expression of pVip56 in E.coli (strain MG1655) confers resistance to phage P1; has no effect against T7. Catalyzes the conversion of guanosine triphosphate (GTP) to 3'-deoxy-3',4'-didehydro-GTP (ddhGTP), probably via a SAM-dependent radical mechanism. The modified nucleotide represses transcription from T7 RNA polymerase-directed genes (possibly by acting as chain terminators), strongly suggesting these nucleotides block viral polymerase transcription. How this protein allows bacteria to resist viruses that do not encode their own RNA polymerase (such as lambda, P1) is unknown. This Fibrobacter sp. (strain UWH6) protein is S-adenosylmethionine-dependent nucleotide dehydratase.